Reading from the N-terminus, the 210-residue chain is Ribosomal RNA large subunit methyltransferase E (210 aa).

S-adenosyl-L-methionine is bound by residues G61, W63, D81, D97, and D122. K162 serves as the catalytic Proton acceptor. The span at 187–196 (KPEASRKRSP) shows a compositional bias: basic and acidic residues. The interval 187–210 (KPEASRKRSPEVYALGQGKRAHMK) is disordered.

The protein belongs to the class I-like SAM-binding methyltransferase superfamily. RNA methyltransferase RlmE family.

It is found in the cytoplasm. It carries out the reaction uridine(2552) in 23S rRNA + S-adenosyl-L-methionine = 2'-O-methyluridine(2552) in 23S rRNA + S-adenosyl-L-homocysteine + H(+). Its function is as follows. Specifically methylates the uridine in position 2552 of 23S rRNA at the 2'-O position of the ribose in the fully assembled 50S ribosomal subunit. This Stenotrophomonas maltophilia (strain K279a) protein is Ribosomal RNA large subunit methyltransferase E.